Consider the following 430-residue polypeptide: Adenylosuccinate synthetase (430 aa).

Residues 12–18 and 40–42 contribute to the GTP site; these read GDEGKGK and GHT. The Proton acceptor role is filled by Asp-13. 2 residues coordinate Mg(2+): Asp-13 and Gly-40. IMP-binding positions include 13-16, 38-41, Thr-128, Arg-142, Gln-223, Thr-238, and Arg-302; these read DEGK and NAGH. His-41 acts as the Proton donor in catalysis. Substrate is bound at residue 298–304; the sequence is TTTGRPR. Residues Arg-304, 330-332, and 412-414 each bind GTP; these read SID and SVG.

This sequence belongs to the adenylosuccinate synthetase family. As to quaternary structure, homodimer. The cofactor is Mg(2+).

It localises to the cytoplasm. The catalysed reaction is IMP + L-aspartate + GTP = N(6)-(1,2-dicarboxyethyl)-AMP + GDP + phosphate + 2 H(+). It functions in the pathway purine metabolism; AMP biosynthesis via de novo pathway; AMP from IMP: step 1/2. Its function is as follows. Plays an important role in the de novo pathway of purine nucleotide biosynthesis. Catalyzes the first committed step in the biosynthesis of AMP from IMP. The sequence is that of Adenylosuccinate synthetase from Streptococcus uberis (strain ATCC BAA-854 / 0140J).